A 310-amino-acid chain; its full sequence is Putative methyltransferase mtx subunit H (310 aa).

The protein belongs to the MtrH family. As to quaternary structure, may be part of a complex composed of 3 subunits; MtxA, MtxH and MtxX.

This chain is Putative methyltransferase mtx subunit H (mtxH), found in Methanosarcina mazei (strain ATCC BAA-159 / DSM 3647 / Goe1 / Go1 / JCM 11833 / OCM 88) (Methanosarcina frisia).